The sequence spans 120 residues: BolA-like protein 2 (120 aa).

This sequence belongs to the BolA/IbaG family. Interacts with FRA1, GRX3 and GRX4.

The protein resides in the cytoplasm. The protein localises to the nucleus. Involved in the regulation of the iron regulon in response to decreased mitochondrial iron-sulfur cluster synthesis. May be involved in mitochondrial organization and biogenesis. The polypeptide is BolA-like protein 2 (BOL2) (Saccharomyces cerevisiae (strain ATCC 204508 / S288c) (Baker's yeast)).